The sequence spans 118 residues: MRNKFIEAFEAKQIEGKKIPEFRPGDTVRVAVEIKEGDKKRIQNFEGVVIAIKGQGAGKTFTVRKIGANNIGIERIFPLYSESIAGIEVVRKGKVRRAKLYYLRGKTGKKARIKERRD.

The protein belongs to the bacterial ribosomal protein bL19 family.

Functionally, this protein is located at the 30S-50S ribosomal subunit interface and may play a role in the structure and function of the aminoacyl-tRNA binding site. This is Large ribosomal subunit protein bL19 from Nautilia profundicola (strain ATCC BAA-1463 / DSM 18972 / AmH).